The sequence spans 439 residues: NAD kinase (439 aa).

Phosphoserine is present on residues Ser-46, Ser-48, Ser-50, Ser-55, and Ser-64.

Belongs to the NAD kinase family. It depends on a divalent metal cation as a cofactor.

It carries out the reaction NAD(+) + ATP = ADP + NADP(+) + H(+). The protein is NAD kinase (Nadk) of Mus musculus (Mouse).